Here is a 160-residue protein sequence, read N- to C-terminus: Probable cyclic pyranopterin monophosphate synthase (160 aa).

Residues 1–12 are compositionally biased toward basic and acidic residues; the sequence is MSDDSELTHVTD. A disordered region spans residues 1–24; sequence MSDDSELTHVTDDGDAQMVDVGEK. Substrate is bound by residues 78–80 and 114–115; these read MCH and ME. Residue D129 is part of the active site.

It belongs to the MoaC family. Homohexamer; trimer of dimers.

The enzyme catalyses (8S)-3',8-cyclo-7,8-dihydroguanosine 5'-triphosphate = cyclic pyranopterin phosphate + diphosphate. Its pathway is cofactor biosynthesis; molybdopterin biosynthesis. Catalyzes the conversion of (8S)-3',8-cyclo-7,8-dihydroguanosine 5'-triphosphate to cyclic pyranopterin monophosphate (cPMP). The sequence is that of Probable cyclic pyranopterin monophosphate synthase from Natronomonas pharaonis (strain ATCC 35678 / DSM 2160 / CIP 103997 / JCM 8858 / NBRC 14720 / NCIMB 2260 / Gabara) (Halobacterium pharaonis).